Consider the following 454-residue polypeptide: MALNVVILAAGKGTRMRSDLPKVLHPIAHKSMVQHVIDTAHSIGSNAIQLVYGYGADKLKSALGEQQLNWMLQAEQLGTGHAVAQAIPNIDDNDTVLILYGDVPLIQASTLEALLAARPDNGVAILTVNLSNPTGYGRIVREQGKVVGIVEQKDANAEQLAINEINTGIMAVPGKALKTWLGRLSNNNAQGEYYLTDIIAMAHADGVEINTAQPQSAIEVEGANNRVQLAQLERAYQAREAEKLMIAGANLRDPSRIDIRGEVTVGMDVMVDVNVIFEGKVVIGNNVSIGAGAILIDCEIADNAEIKPYSIIEGAKLGVAASAGPFARLRPGAELMQDAHIGNFVEMKKAVLGVGSKAGHLAYLGDAQIGAGVNIGAGTITCNYDGANKHLTVIEDNVFVGSDTQLVAPVTIGKGATLGAGSTITRDVGEDELVITRVKQKHLTGWQRPVKIKK.

The pyrophosphorylase stretch occupies residues 1-226; it reads MALNVVILAA…AIEVEGANNR (226 aa). UDP-N-acetyl-alpha-D-glucosamine contacts are provided by residues 8–11, K22, Q73, 78–79, 100–102, G137, E151, N166, and N224; these read LAAG, GT, and YGD. Residue D102 participates in Mg(2+) binding. N224 is a binding site for Mg(2+). Residues 227-247 are linker; sequence VQLAQLERAYQAREAEKLMIA. An N-acetyltransferase region spans residues 248–454; it reads GANLRDPSRI…GWQRPVKIKK (207 aa). UDP-N-acetyl-alpha-D-glucosamine contacts are provided by R330 and K348. Residue H360 is the Proton acceptor of the active site. UDP-N-acetyl-alpha-D-glucosamine-binding residues include Y363 and N374. Residues A377, 383-384, S402, A420, and R437 each bind acetyl-CoA; that span reads NY.

In the N-terminal section; belongs to the N-acetylglucosamine-1-phosphate uridyltransferase family. This sequence in the C-terminal section; belongs to the transferase hexapeptide repeat family. As to quaternary structure, homotrimer. It depends on Mg(2+) as a cofactor.

The protein resides in the cytoplasm. It catalyses the reaction alpha-D-glucosamine 1-phosphate + acetyl-CoA = N-acetyl-alpha-D-glucosamine 1-phosphate + CoA + H(+). The enzyme catalyses N-acetyl-alpha-D-glucosamine 1-phosphate + UTP + H(+) = UDP-N-acetyl-alpha-D-glucosamine + diphosphate. It participates in nucleotide-sugar biosynthesis; UDP-N-acetyl-alpha-D-glucosamine biosynthesis; N-acetyl-alpha-D-glucosamine 1-phosphate from alpha-D-glucosamine 6-phosphate (route II): step 2/2. Its pathway is nucleotide-sugar biosynthesis; UDP-N-acetyl-alpha-D-glucosamine biosynthesis; UDP-N-acetyl-alpha-D-glucosamine from N-acetyl-alpha-D-glucosamine 1-phosphate: step 1/1. The protein operates within bacterial outer membrane biogenesis; LPS lipid A biosynthesis. Catalyzes the last two sequential reactions in the de novo biosynthetic pathway for UDP-N-acetylglucosamine (UDP-GlcNAc). The C-terminal domain catalyzes the transfer of acetyl group from acetyl coenzyme A to glucosamine-1-phosphate (GlcN-1-P) to produce N-acetylglucosamine-1-phosphate (GlcNAc-1-P), which is converted into UDP-GlcNAc by the transfer of uridine 5-monophosphate (from uridine 5-triphosphate), a reaction catalyzed by the N-terminal domain. In Shewanella sp. (strain ANA-3), this protein is Bifunctional protein GlmU.